The primary structure comprises 338 residues: GTPase Obg (338 aa).

In terms of domain architecture, Obg spans 1–159; sequence MQFIDEVKIH…RWLRLELKLL (159 aa). Residues 160 to 331 form the OBG-type G domain; it reads ADVGLLGFPN…LLDEIARSLW (172 aa). GTP-binding positions include 166–173, 191–195, 213–216, 283–286, and 312–314; these read GFPNVGKS, FTTLK, DIPG, NKMD, and SAA. Mg(2+) contacts are provided by Ser-173 and Thr-193.

Belongs to the TRAFAC class OBG-HflX-like GTPase superfamily. OBG GTPase family. In terms of assembly, monomer. The cofactor is Mg(2+).

It localises to the cytoplasm. Functionally, an essential GTPase which binds GTP, GDP and possibly (p)ppGpp with moderate affinity, with high nucleotide exchange rates and a fairly low GTP hydrolysis rate. Plays a role in control of the cell cycle, stress response, ribosome biogenesis and in those bacteria that undergo differentiation, in morphogenesis control. This Geobacter sulfurreducens (strain ATCC 51573 / DSM 12127 / PCA) protein is GTPase Obg.